The following is a 572-amino-acid chain: Protein IQ-DOMAIN 30 (572 aa).

The disordered stretch occupies residues 75–96 (SDDEIQVSEVQPTDSQDVASVP). Positions 82–92 (SEVQPTDSQDV) are enriched in polar residues. IQ domains follow at residues 108 to 136 (QEIA…GIIR) and 137 to 154 (LQAL…VSTL). The calmodulin-binding stretch occupies residues 159 to 178 (GIVRLQALARGREIRHSDIG). Disordered regions lie at residues 282–332 (RPKK…MDNP) and 399–572 (IQTH…EWKR). 2 stretches are compositionally biased toward polar residues: residues 291–305 (PSSN…QTSS) and 400–419 (QTHT…VNQI). The span at 428–455 (AEEKEDVKEERTPKQNHKENSAGKENQK) shows a compositional bias: basic and acidic residues. Polar residues-rich tracts occupy residues 459–493 (KASS…QATK), 502–514 (QGSS…GTTE), and 522–560 (LPSS…SSRE).

It belongs to the IQD family. Binds to multiple calmodulin (CaM) in the presence of Ca(2+) and CaM-like proteins.

Its subcellular location is the nucleus envelope. The protein localises to the cytoplasm. The protein resides in the cytoskeleton. May be involved in cooperative interactions with calmodulins or calmodulin-like proteins. Recruits calmodulin proteins to microtubules, thus being a potential scaffold in cellular signaling and trafficking. May associate with nucleic acids and regulate gene expression at the transcriptional or post-transcriptional level. The protein is Protein IQ-DOMAIN 30 of Arabidopsis thaliana (Mouse-ear cress).